The following is a 110-amino-acid chain: Chloride intracellular channel protein 1 (110 aa).

Residue A2 is modified to N-acetylalanine. Residues 2-90 (AEEQPQVELF…EEFLEAVLCP (89 aa)) form a required for insertion into the membrane region. K13 carries the N6-acetyllysine modification. The short motif at 24-27 (CPFS) is the G-site element. A disulfide bridge connects residues C24 and C59. Residues 26–46 (FSQRLFMVLWLKGVTFNVTTV) traverse the membrane as a helical segment.

This sequence belongs to the chloride channel CLIC family. Monomer. Homodimer (in vitro). Interacts with TRAPPC2. Dimerization requires a conformation change that leads to the exposure of a large hydrophobic surface. In vivo, this may lead to membrane insertion.

The protein resides in the nucleus. The protein localises to the nucleus membrane. It is found in the cytoplasm. Its subcellular location is the cell membrane. It localises to the endoplasmic reticulum. The catalysed reaction is L-dehydroascorbate + 2 glutathione = glutathione disulfide + L-ascorbate. It carries out the reaction chloride(in) = chloride(out). It catalyses the reaction iodide(out) = iodide(in). The enzyme catalyses thiocyanate(in) = thiocyanate(out). The catalysed reaction is nitrate(in) = nitrate(out). It carries out the reaction bromide(in) = bromide(out). It catalyses the reaction fluoride(in) = fluoride(out). Functionally, in the soluble state, catalyzes glutaredoxin-like thiol disulfide exchange reactions with reduced glutathione as electron donor. Reduces selenite and dehydroascorbate and may act as an antioxidant during oxidative stress response. Can insert into membranes and form voltage-dependent multi-ion conductive channels. Membrane insertion seems to be redox-regulated and may occur only under oxidizing conditions. Involved in regulation of the cell cycle. This chain is Chloride intracellular channel protein 1 (CLIC1), found in Sus scrofa (Pig).